Reading from the N-terminus, the 169-residue chain is Crossover junction endodeoxyribonuclease RuvC (169 aa).

Active-site residues include aspartate 7, glutamate 67, and aspartate 139. Mg(2+) is bound by residues aspartate 7, glutamate 67, and aspartate 139.

The protein belongs to the RuvC family. As to quaternary structure, homodimer which binds Holliday junction (HJ) DNA. The HJ becomes 2-fold symmetrical on binding to RuvC with unstacked arms; it has a different conformation from HJ DNA in complex with RuvA. In the full resolvosome a probable DNA-RuvA(4)-RuvB(12)-RuvC(2) complex forms which resolves the HJ. The cofactor is Mg(2+).

Its subcellular location is the cytoplasm. It carries out the reaction Endonucleolytic cleavage at a junction such as a reciprocal single-stranded crossover between two homologous DNA duplexes (Holliday junction).. In terms of biological role, the RuvA-RuvB-RuvC complex processes Holliday junction (HJ) DNA during genetic recombination and DNA repair. Endonuclease that resolves HJ intermediates. Cleaves cruciform DNA by making single-stranded nicks across the HJ at symmetrical positions within the homologous arms, yielding a 5'-phosphate and a 3'-hydroxyl group; requires a central core of homology in the junction. The consensus cleavage sequence is 5'-(A/T)TT(C/G)-3'. Cleavage occurs on the 3'-side of the TT dinucleotide at the point of strand exchange. HJ branch migration catalyzed by RuvA-RuvB allows RuvC to scan DNA until it finds its consensus sequence, where it cleaves and resolves the cruciform DNA. The chain is Crossover junction endodeoxyribonuclease RuvC from Rhodospirillum rubrum (strain ATCC 11170 / ATH 1.1.1 / DSM 467 / LMG 4362 / NCIMB 8255 / S1).